The primary structure comprises 369 residues: GTPase Obg (369 aa).

An Obg domain is found at 1-158; that stretch reads MFTDVVELTV…RRIKLDLKLI (158 aa). The segment at 126 to 146 is disordered; it reads NTHFKSSTNQRPTYAQPGEKG. Residues 128–138 are compositionally biased toward polar residues; the sequence is HFKSSTNQRPT. The 204-residue stretch at 159-362 folds into the OBG-type G domain; sequence ADVGLVGFPN…LKHALFNLVQ (204 aa). GTP is bound by residues 165–172, 190–194, 212–215, 280–283, and 343–345; these read GFPNVGKS, FTTLT, DIPG, TRAD, and SSA. Mg(2+) contacts are provided by serine 172 and threonine 192.

The protein belongs to the TRAFAC class OBG-HflX-like GTPase superfamily. OBG GTPase family. In terms of assembly, monomer. Mg(2+) is required as a cofactor.

The protein resides in the cytoplasm. Functionally, an essential GTPase which binds GTP, GDP and possibly (p)ppGpp with moderate affinity, with high nucleotide exchange rates and a fairly low GTP hydrolysis rate. Plays a role in control of the cell cycle, stress response, ribosome biogenesis and in those bacteria that undergo differentiation, in morphogenesis control. This Sulfurimonas denitrificans (strain ATCC 33889 / DSM 1251) (Thiomicrospira denitrificans (strain ATCC 33889 / DSM 1251)) protein is GTPase Obg.